The chain runs to 299 residues: Ribosomal RNA small subunit methyltransferase H (299 aa).

S-adenosyl-L-methionine contacts are provided by residues 32–34 (AGH), Asp-52, Phe-79, Asp-100, and Gln-107.

It belongs to the methyltransferase superfamily. RsmH family.

It localises to the cytoplasm. It carries out the reaction cytidine(1402) in 16S rRNA + S-adenosyl-L-methionine = N(4)-methylcytidine(1402) in 16S rRNA + S-adenosyl-L-homocysteine + H(+). In terms of biological role, specifically methylates the N4 position of cytidine in position 1402 (C1402) of 16S rRNA. In Mycoplasmopsis pulmonis (strain UAB CTIP) (Mycoplasma pulmonis), this protein is Ribosomal RNA small subunit methyltransferase H.